Reading from the N-terminus, the 228-residue chain is Biosynthetic peptidoglycan transglycosylase (228 aa).

The chain crosses the membrane as a helical span at residues 8 to 28 (ILAALVAAFLLYNLWVLGHII).

Belongs to the glycosyltransferase 51 family.

It is found in the cell inner membrane. The enzyme catalyses [GlcNAc-(1-&gt;4)-Mur2Ac(oyl-L-Ala-gamma-D-Glu-L-Lys-D-Ala-D-Ala)](n)-di-trans,octa-cis-undecaprenyl diphosphate + beta-D-GlcNAc-(1-&gt;4)-Mur2Ac(oyl-L-Ala-gamma-D-Glu-L-Lys-D-Ala-D-Ala)-di-trans,octa-cis-undecaprenyl diphosphate = [GlcNAc-(1-&gt;4)-Mur2Ac(oyl-L-Ala-gamma-D-Glu-L-Lys-D-Ala-D-Ala)](n+1)-di-trans,octa-cis-undecaprenyl diphosphate + di-trans,octa-cis-undecaprenyl diphosphate + H(+). It participates in cell wall biogenesis; peptidoglycan biosynthesis. In terms of biological role, peptidoglycan polymerase that catalyzes glycan chain elongation from lipid-linked precursors. The sequence is that of Biosynthetic peptidoglycan transglycosylase from Chromobacterium violaceum (strain ATCC 12472 / DSM 30191 / JCM 1249 / CCUG 213 / NBRC 12614 / NCIMB 9131 / NCTC 9757 / MK).